The chain runs to 226 residues: uncharacterized protein (226 aa).

Belongs to the IIV-6 350L family.

This is an uncharacterized protein from Invertebrate iridescent virus 3 (IIV-3).